Reading from the N-terminus, the 294-residue chain is Probable HTH-type transcriptional regulator LrrA (294 aa).

One can recognise an HTH lysR-type domain in the interval 1–58 (MNITQLQILAAVVETGNFSAAALQLDLSQSAVSRAIAALEDELGVVLLSRGRFGARPT). Positions 18–37 (FSAAALQLDLSQSAVSRAIA) form a DNA-binding region, H-T-H motif.

The protein belongs to the LysR transcriptional regulatory family.

The chain is Probable HTH-type transcriptional regulator LrrA (lrrA) from Synechococcus elongatus (strain ATCC 33912 / PCC 7942 / FACHB-805) (Anacystis nidulans R2).